A 619-amino-acid polypeptide reads, in one-letter code: Telomere repeat-binding protein 3 (619 aa).

The Ubiquitin-like domain occupies 324 to 403 (VKLSIKSFRI…LDNLGFTLEP (80 aa)). Positions 504–563 (AQRRTRRPFSVTEVEALVQAVEELGTGRWRDVKLRAFEDADHRTYVDLKDKWKTLVHTAS) constitute an HTH myb-type domain. A DNA-binding region (H-T-H motif) is located at residues 532–559 (WRDVKLRAFEDADHRTYVDLKDKWKTLV). Positions 593–619 (QGKHQARGASKDPDMNRGGAFESGVSV) are disordered.

Homodimer and heterodimer with TRP1. In terms of tissue distribution, expressed ubiquitously. Highest expression in flowers and roots.

The protein resides in the nucleus. Its function is as follows. Binds specifically to the plant telomeric double-stranded DNA sequences. At least 2 repeats of telomeric sequences are required for binding. Induces DNA bending. This is Telomere repeat-binding protein 3 (TRP3) from Arabidopsis thaliana (Mouse-ear cress).